The chain runs to 235 residues: Eukaryotic translation initiation factor 4E-1 (235 aa).

A disordered region spans residues 1–52; that stretch reads MVVEDSMKATSAEDLSNSIANQNPRGRGGDEDEELEEGEIVGDDDLDSSNLS. A compositionally biased stretch (polar residues) spans 13 to 24; the sequence is EDLSNSIANQNP. Residues 30–47 are compositionally biased toward acidic residues; the sequence is DEDEELEEGEIVGDDDLD. EIF4G-binding regions lie at residues 60–63 and 70–106; these read HPLE and FDNP…NNIH. MRNA is bound by residues 78-83, Lys-110, and 128-129; these read KQATWG and WE. An intrachain disulfide couples Cys-133 to Cys-171. Positions 154 to 163 are EIF4G-binding; the sequence is YTLLAMIGEQ. MRNA contacts are provided by residues 178–183 and 223–227; these read RSGQDK and KKFDR.

The protein belongs to the eukaryotic initiation factor 4E family. In terms of assembly, EIF4F is a multi-subunit complex, the composition of which varies with external and internal environmental conditions. It is composed of at least EIF4A, EIF4E and EIF4G. EIF4E is also known to interact with other partners. Interacts directly with eIF4G. In higher plants two isoforms of EIF4F have been identified, named isoform EIF4F and isoform EIF(iso)4F. Isoform EIF4F has subunits p220 and p26, whereas isoform EIF(iso)4F has subunits p82 and p28. As to quaternary structure, (Microbial infection) Interacts with potyvirus viral genome-linked protein (VPg); this interaction is possible in susceptible hosts but impaired in resistant plants. Post-translationally, according to the redox status, the Cys-133-Cys-171 disulfide bridge may have a role in regulating protein function by affecting its ability to bind capped mRNA.

It is found in the nucleus. It localises to the cytoplasm. Its function is as follows. Component of the protein complex eIF4F, which is involved in the recognition of the mRNA cap, ATP-dependent unwinding of 5'-terminal secondary structure and recruitment of mRNA to the ribosome. Recognizes and binds the 7-methylguanosine-containing mRNA cap during an early step in the initiation of protein synthesis and facilitates ribosome binding by inducing the unwinding of the mRNAs secondary structures. Key component of recessive resistance to potyviruses and Tombusviridae genus Carmovirus such as melon necrotic spot virus (MNSV). (Microbial infection) Susceptibility host factor required for viral infection by recruiting viral RNAs, including uncapped and non-polyadenylated RNA, to the host ribosomal complex via an interaction with viral genome-linked protein (VPg). This is Eukaryotic translation initiation factor 4E-1 from Cucumis melo (Muskmelon).